A 308-amino-acid chain; its full sequence is Cytochrome b (308 aa).

4 helical membrane-spanning segments follow: residues 1–21, 45–66, 81–101, and 146–166; these read FGSLLGICLLTQIITGLLLAT, WLIRNLHANGASFFFICIYIHI, WNVGVILLLTLMATAFVGYVL, and FFALHFLLPFAITGLTLVHLT. Heme b contacts are provided by His51 and His65. The heme b site is built by His150 and His164. His169 is an a ubiquinone binding site. 3 helical membrane-spanning segments follow: residues 194 to 214, 256 to 276, and 288 to 308; these read MKDILGFALMIIPLAALALFS, LGGVLALAASILVLFLIPLLH, and LSQILFWTLVANLLILTWVGS.

Belongs to the cytochrome b family. In terms of assembly, the cytochrome bc1 complex contains 11 subunits: 3 respiratory subunits (MT-CYB, CYC1 and UQCRFS1), 2 core proteins (UQCRC1 and UQCRC2) and 6 low-molecular weight proteins (UQCRH/QCR6, UQCRB/QCR7, UQCRQ/QCR8, UQCR10/QCR9, UQCR11/QCR10 and a cleavage product of UQCRFS1). This cytochrome bc1 complex then forms a dimer. The cofactor is heme b.

The protein resides in the mitochondrion inner membrane. Functionally, component of the ubiquinol-cytochrome c reductase complex (complex III or cytochrome b-c1 complex) that is part of the mitochondrial respiratory chain. The b-c1 complex mediates electron transfer from ubiquinol to cytochrome c. Contributes to the generation of a proton gradient across the mitochondrial membrane that is then used for ATP synthesis. The protein is Cytochrome b (MT-CYB) of Ptiloprora plumbea (Leaden honeyeater).